Reading from the N-terminus, the 416-residue chain is Interleukin-1 receptor type 2 (416 aa).

Residues 1 to 13 form the signal peptide; the sequence is MFILLVLVTGVSA. The Extracellular segment spans residues 14–355; it reads FTTPAVVHTG…FQSLHTTVKE (342 aa). 3 Ig-like C2-type domains span residues 29-136, 146-233, and 249-357; these read PVTS…LELK, PLVS…YNIT, and PVII…KEVS. 3 disulfide bridges follow: C42–C128, C64–C120, and C164–C219. N-linked (GlcNAc...) asparagine glycosylation is found at N124, N208, N231, and N289. An intrachain disulfide couples C270 to C338. Residues 356-381 traverse the membrane as a helical segment; sequence VSSTFSWGIALAPLSLIILVVGAIWI. Residues 382 to 416 are Cytoplasmic-facing; that stretch reads RRRCKRQAGKTYGLTKLPTDNQDFPSSPNQIKEMK. The tract at residues 396–416 is disordered; that stretch reads TKLPTDNQDFPSSPNQIKEMK. Residues 399 to 416 show a composition bias toward polar residues; it reads PTDNQDFPSSPNQIKEMK.

The protein belongs to the interleukin-1 receptor family. As to quaternary structure, associates with IL1RAP to form a non-signaling interleukin-1 receptor complex. A soluble form (sIL1R2) can also be produced by proteolytic cleavage at the cell surface (shedding) involving a metalloproteinase.

It is found in the membrane. Its subcellular location is the cell membrane. The protein localises to the secreted. Functionally, non-signaling receptor for IL1A, IL1B and IL1RN. Reduces IL1B activities. Serves as a decoy receptor by competitive binding to IL1B and preventing its binding to IL1R1. Also modulates cellular response through non-signaling association with IL1RAP after binding to IL1B. IL1R2 (membrane and secreted forms) preferentially binds IL1B and poorly IL1A and IL1RN. The secreted IL1R2 recruits secreted IL1RAP with high affinity; this complex formation may be the dominant mechanism for neutralization of IL1B by secreted/soluble receptors. The chain is Interleukin-1 receptor type 2 (Il1r2) from Rattus norvegicus (Rat).